Reading from the N-terminus, the 147-residue chain is Hemoglobin subunit gamma (147 aa).

Residues N3 to H147 enclose the Globin domain. Positions 64 and 93 each coordinate heme b.

Belongs to the globin family. In terms of assembly, heterotetramer of two alpha chains and two gamma chains in fetal hemoglobin (Hb F). As to expression, red blood cells.

Functionally, gamma chains make up the fetal hemoglobin F, in combination with alpha chains. This is Hemoglobin subunit gamma (HBG) from Alouatta seniculus (Red howler monkey).